A 236-amino-acid chain; its full sequence is ATP-dependent dethiobiotin synthetase BioD (236 aa).

Mg(2+) is bound at residue threonine 19. Residue lysine 40 is part of the active site. Mg(2+) contacts are provided by aspartate 61 and glutamate 122. ATP is bound by residues aspartate 61, 122–125 (EGVG), 182–183 (NT), and 211–213 (PRL).

This sequence belongs to the dethiobiotin synthetase family. As to quaternary structure, homodimer. Requires Mg(2+) as cofactor.

The protein resides in the cytoplasm. It carries out the reaction (7R,8S)-7,8-diammoniononanoate + CO2 + ATP = (4R,5S)-dethiobiotin + ADP + phosphate + 3 H(+). It participates in cofactor biosynthesis; biotin biosynthesis; biotin from 7,8-diaminononanoate: step 1/2. Functionally, catalyzes a mechanistically unusual reaction, the ATP-dependent insertion of CO2 between the N7 and N8 nitrogen atoms of 7,8-diaminopelargonic acid (DAPA, also called 7,8-diammoniononanoate) to form a ureido ring. This Janthinobacterium sp. (strain Marseille) (Minibacterium massiliensis) protein is ATP-dependent dethiobiotin synthetase BioD.